Here is a 310-residue protein sequence, read N- to C-terminus: Low affinity immunoglobulin gamma Fc region receptor II-b (310 aa).

The N-terminal stretch at Met-1–Gly-42 is a signal peptide. The Extracellular segment spans residues Thr-43–Pro-217. Ig-like C2-type domains follow at residues Pro-48–Thr-127 and Glu-131–Thr-213. 2 cysteine pairs are disulfide-bonded: Cys-71/Cys-113 and Cys-152/Cys-196. 3 N-linked (GlcNAc...) asparagine glycosylation sites follow: Asn-106, Asn-180, and Asn-187. The chain crosses the membrane as a helical span at residues Ser-218 to Ala-240. Over Val-241–Ile-310 the chain is Cytoplasmic. The ITIM motif signature appears at Ile-290–Leu-295. Position 292 is a phosphotyrosine; by SRC-type Tyr-kinases (Tyr-292).

As to quaternary structure, interacts with INPP5D/SHIP1. Interacts with FGR. Interacts with LYN. In terms of assembly, (Microbial infection) Isoform IIB1 interacts with measles virus protein N. Protein N is released in the blood following lysis of measles infected cells. This interaction presumably block inflammatory immune response. Phosphorylated by the SRC-type Tyr-kinases LYN and BLK. As to expression, is the most broadly distributed Fc-gamma-receptor. Expressed in monocyte, neutrophils, macrophages, basophils, eosinophils, Langerhans cells, B-cells, platelets cells and placenta (endothelial cells). Not detected in natural killer cells.

Its subcellular location is the cell membrane. In terms of biological role, receptor for the Fc region of complexed or aggregated immunoglobulins gamma. Low affinity receptor. Involved in a variety of effector and regulatory functions such as phagocytosis of immune complexes and modulation of antibody production by B-cells. Binding to this receptor results in down-modulation of previous state of cell activation triggered via antigen receptors on B-cells (BCR), T-cells (TCR) or via another Fc receptor. Isoform IIB1 fails to mediate endocytosis or phagocytosis. Isoform IIB2 does not trigger phagocytosis. This chain is Low affinity immunoglobulin gamma Fc region receptor II-b (FCGR2B), found in Homo sapiens (Human).